The primary structure comprises 212 residues: Vesicle transport protein SFT2C (212 aa).

Over 1–78 (MADLHRQLQD…TRGQRLVAGG (78 aa)) the chain is Cytoplasmic. A helical membrane pass occupies residues 79–99 (LCLLLAALCFGLAALYAPVLL). Over 100-104 (LRARK) the chain is Lumenal. Residues 105 to 125 (FALLWSLGSVLAWASAALLRG) traverse the membrane as a helical segment. Topologically, residues 126–142 (GPACGRLLRGEETPSRS) are cytoplasmic. Residues 143–165 (TLGYAAALGATLYAALVLRSTVL) form a helical membrane-spanning segment. Topologically, residues 166 to 174 (TALGACAQV) are lumenal. The helical transmembrane segment at 175 to 197 (AALLYALIGLLPWGGVTALRLAL) threads the bilayer. Topologically, residues 198–212 (GRLNRGTGLANALPV) are cytoplasmic.

Belongs to the SFT2 family.

It localises to the membrane. In terms of biological role, may be involved in fusion of retrograde transport vesicles derived from an endocytic compartment with the Golgi complex. In Mus musculus (Mouse), this protein is Vesicle transport protein SFT2C.